The primary structure comprises 220 residues: Probable septum site-determining protein MinC (220 aa).

This sequence belongs to the MinC family. Interacts with MinD and FtsZ.

Its function is as follows. Cell division inhibitor that blocks the formation of polar Z ring septums. Rapidly oscillates between the poles of the cell to destabilize FtsZ filaments that have formed before they mature into polar Z rings. Prevents FtsZ polymerization. In Vibrio atlanticus (strain LGP32) (Vibrio splendidus (strain Mel32)), this protein is Probable septum site-determining protein MinC.